We begin with the raw amino-acid sequence, 728 residues long: 1,4-alpha-glucan branching enzyme GlgB (728 aa).

Residue Asp405 is the Nucleophile of the active site. Catalysis depends on Glu458, which acts as the Proton donor.

The protein belongs to the glycosyl hydrolase 13 family. GlgB subfamily. As to quaternary structure, monomer.

It catalyses the reaction Transfers a segment of a (1-&gt;4)-alpha-D-glucan chain to a primary hydroxy group in a similar glucan chain.. It participates in glycan biosynthesis; glycogen biosynthesis. Functionally, catalyzes the formation of the alpha-1,6-glucosidic linkages in glycogen by scission of a 1,4-alpha-linked oligosaccharide from growing alpha-1,4-glucan chains and the subsequent attachment of the oligosaccharide to the alpha-1,6 position. This is 1,4-alpha-glucan branching enzyme GlgB from Shigella dysenteriae serotype 1 (strain Sd197).